A 122-amino-acid chain; its full sequence is Large ribosomal subunit protein uL14 (122 aa).

This sequence belongs to the universal ribosomal protein uL14 family. As to quaternary structure, part of the 50S ribosomal subunit. Forms a cluster with proteins L3 and L19. In the 70S ribosome, L14 and L19 interact and together make contacts with the 16S rRNA in bridges B5 and B8.

Its function is as follows. Binds to 23S rRNA. Forms part of two intersubunit bridges in the 70S ribosome. The polypeptide is Large ribosomal subunit protein uL14 (Flavobacterium psychrophilum (strain ATCC 49511 / DSM 21280 / CIP 103535 / JIP02/86)).